A 223-amino-acid chain; its full sequence is Endonuclease NucS (223 aa).

Belongs to the NucS endonuclease family.

It is found in the cytoplasm. In terms of biological role, cleaves both 3' and 5' ssDNA extremities of branched DNA structures. This is Endonuclease NucS from Mycolicibacterium gilvum (strain PYR-GCK) (Mycobacterium gilvum (strain PYR-GCK)).